Consider the following 440-residue polypeptide: MFLAQEIIRKKRDGHALSDEEIRFFINGIRDNTISEGQIAALAMTIFFHDMTMPERVSLTMAMRDSGTVLDWKSLNLNGPIVDKHSTGGVGDVTSLMLGPMVAACGGYVPMISGRGLGHTGGTLDKLEAIPGFDIFPDDNRFREIIQDVGVAIIGQTSSLAPADKRFYATRDITATVDSIPLITGSILAKKLAEGLDALVMDVKVGSGAFMPTYELSEALAEAIVGVANGAGVRTTALLTDMNQVLASSAGNAVEVREAVQFLTGEYRNPRLFDVTMALCVEMLISGNLAKDDAEARAKLQAVLDNGKAAEVFGRMVAAQKGPSDFVENYDKYLPTAMLSKAVYADTEGFISAMDTRALGMAVVSMGGGRRQASDTIDYSVGFTDMARLGDSIDGQRPLAVIHAKDEASWQEAAKAVKAAIILDDKAPASTPSVYRRITE.

This sequence belongs to the thymidine/pyrimidine-nucleoside phosphorylase family. In terms of assembly, homodimer.

It catalyses the reaction thymidine + phosphate = 2-deoxy-alpha-D-ribose 1-phosphate + thymine. It participates in pyrimidine metabolism; dTMP biosynthesis via salvage pathway; dTMP from thymine: step 1/2. Its function is as follows. The enzymes which catalyze the reversible phosphorolysis of pyrimidine nucleosides are involved in the degradation of these compounds and in their utilization as carbon and energy sources, or in the rescue of pyrimidine bases for nucleotide synthesis. This Salmonella paratyphi A (strain ATCC 9150 / SARB42) protein is Thymidine phosphorylase.